A 100-amino-acid polypeptide reads, in one-letter code: Large ribosomal subunit protein uL23 (100 aa).

Belongs to the universal ribosomal protein uL23 family. As to quaternary structure, part of the 50S ribosomal subunit. Contacts protein L29, and trigger factor when it is bound to the ribosome.

In terms of biological role, one of the early assembly proteins it binds 23S rRNA. One of the proteins that surrounds the polypeptide exit tunnel on the outside of the ribosome. Forms the main docking site for trigger factor binding to the ribosome. The polypeptide is Large ribosomal subunit protein uL23 (Mycolicibacterium gilvum (strain PYR-GCK) (Mycobacterium gilvum (strain PYR-GCK))).